We begin with the raw amino-acid sequence, 243 residues long: Small ribosomal subunit protein uS2 (243 aa).

This sequence belongs to the universal ribosomal protein uS2 family.

The sequence is that of Small ribosomal subunit protein uS2 from Aliivibrio salmonicida (strain LFI1238) (Vibrio salmonicida (strain LFI1238)).